Here is a 288-residue protein sequence, read N- to C-terminus: Syntaxin-1A (288 aa).

Residues 1–265 (MKDRTQELRT…KYQSKARRKK (265 aa)) lie on the Cytoplasmic side of the membrane. Phosphoserine is present on residues Ser-14, Ser-64, and Ser-95. Residues 68 to 109 (DEKTKEELEELMSDIKKTANKVRSKLKSIEQSIEQEEGLNRS) are a coiled coil. Ser-188 carries the phosphoserine; by DAPK1 modification. The t-SNARE coiled-coil homology domain maps to 192-254 (LSEIETRHSE…ERAVSDTKKA (63 aa)). Glycyl lysine isopeptide (Lys-Gly) (interchain with G-Cter in SUMO) cross-links involve residues Lys-252, Lys-253, and Lys-256. The chain crosses the membrane as a helical; Anchor for type IV membrane protein span at residues 266–286 (IMIIICCVIPGIVIASTVGGI). Topologically, residues 287–288 (FA) are extracellular.

The protein belongs to the syntaxin family. Part of the SNARE core complex containing SNAP25, VAMP2 and STX1A; this complex constitutes the basic catalytic machinery of the complex neurotransmitter release apparatus. The SNARE complex interacts with CPLX1. Interacts with STXBP1. The interaction with STXBP1 promotes assembly of the SNARE complex. Interacts (via C-terminus) with KCNB1 (via C-terminus); the interaction increases in a calcium-dependent manner and induces a pore-independent enhancement of exocytosis in neuroendocrine cells, chromaffin cells, pancreatic beta cells and from the soma of dorsal root ganglia (DRG) neurons. Interacts with SYTL4. Interacts with STXBP6. Interacts with PLCL1 (via C2 domain). Interacts with OTOF. Interacts with LGI3. Interacts (via the H3 domain) with SLC6A4 (via the N-terminus); this interaction regulates SLC4A6 channel conductance in thalamocortical neurons. Interacts with SYT6 and SYT8; the interaction is Ca(2+)-dependent. Interacts with VAMP8. Interacts with SNAP23. Interacts with VAPA and SYBU. Interacts with PRRT2. Interacts with SEPT8. Interacts with STXBP5L. Interacts with synaptotagmin-1/SYT1. Interacts with SEPTIN5; in the cerebellar cortex. Interacts with SEPTIN4; in the striatum. Post-translationally, phosphorylated by CK2. Phosphorylation at Ser-188 by DAPK1 significantly decreases its interaction with STXBP1. In terms of processing, sumoylated, sumoylation is required for regulation of synaptic vesicle endocytosis.

It is found in the cytoplasmic vesicle. The protein resides in the secretory vesicle. Its subcellular location is the synaptic vesicle membrane. It localises to the cell membrane. The protein localises to the synapse. It is found in the synaptosome. In terms of biological role, plays an essential role in hormone and neurotransmitter calcium-dependent exocytosis and endocytosis. Part of the SNARE (Soluble NSF Attachment Receptor) complex composed of SNAP25, STX1A and VAMP2 which mediates the fusion of synaptic vesicles with the presynaptic plasma membrane. STX1A and SNAP25 are localized on the plasma membrane while VAMP2 resides in synaptic vesicles. The pairing of the three SNAREs from the N-terminal SNARE motifs to the C-terminal anchors leads to the formation of the SNARE complex, which brings membranes into close proximity and results in final fusion. Participates in the calcium-dependent regulation of acrosomal exocytosis in sperm. Also plays an important role in the exocytosis of hormones such as insulin or glucagon-like peptide 1 (GLP-1). The protein is Syntaxin-1A (STX1A) of Pongo abelii (Sumatran orangutan).